The chain runs to 76 residues: Small proline-rich protein 2G (76 aa).

Tandem repeats lie at residues 21–29 (PKCPEPCPL), 30–38 (PKCPEPCPP), and 39–47 (PKCPEPCPE). Residues 21–47 (PKCPEPCPLPKCPEPCPPPKCPEPCPE) are 3 X 9 AA approximate tandem repeats. The disordered stretch occupies residues 55-76 (QQKCPPVQTPPPCQQKCPPKSK).

It belongs to the cornifin (SPRR) family. Expressed in uterus.

It is found in the cytoplasm. Cross-linked envelope protein of keratinocytes. It is a keratinocyte protein that first appears in the cell cytosol, but ultimately becomes cross-linked to membrane proteins by transglutaminase. All that results in the formation of an insoluble envelope beneath the plasma membrane. This chain is Small proline-rich protein 2G (Sprr2g), found in Mus musculus (Mouse).